The chain runs to 494 residues: NAD(P)H-quinone oxidoreductase subunit 2 B, chloroplastic (494 aa).

The next 13 helical transmembrane spans lie at 6-26 (LLLF…GLIL), 39-59 (TPWF…VLLF), 81-101 (IFRF…VEYI), 106-126 (MAIT…MVLC), 131-151 (LVTI…LSGY), 166-186 (LLMG…LYGL), 211-231 (ILIA…LVPF), 277-297 (WHLL…LIAI), 305-325 (MLAY…IAGD), 336-356 (YMLF…LFGL), 377-397 (AFSL…AGFF), 413-433 (LLVS…LKII), and 468-488 (MIVC…IIAI).

This sequence belongs to the complex I subunit 2 family. As to quaternary structure, NDH is composed of at least 16 different subunits, 5 of which are encoded in the nucleus.

Its subcellular location is the plastid. It localises to the chloroplast thylakoid membrane. It carries out the reaction a plastoquinone + NADH + (n+1) H(+)(in) = a plastoquinol + NAD(+) + n H(+)(out). The enzyme catalyses a plastoquinone + NADPH + (n+1) H(+)(in) = a plastoquinol + NADP(+) + n H(+)(out). Functionally, NDH shuttles electrons from NAD(P)H:plastoquinone, via FMN and iron-sulfur (Fe-S) centers, to quinones in the photosynthetic chain and possibly in a chloroplast respiratory chain. The immediate electron acceptor for the enzyme in this species is believed to be plastoquinone. Couples the redox reaction to proton translocation, and thus conserves the redox energy in a proton gradient. This is NAD(P)H-quinone oxidoreductase subunit 2 B, chloroplastic from Cycas taitungensis (Prince sago).